A 412-amino-acid chain; its full sequence is MNALAATNRNFKLAARLLGLDSKLELSLLIPFREIKVECTIPKDDGTLASFVGFRVQHDNARGPMKGGIRYHPEVDPDEVNALAQLMTWKTAVANIPYGGAKGGIGCSPSDLSISELERLTRVFTQKIHDLIGIHTDVPAPDMGTNPQTMAWILDEYSKFHGYSPAVVTGKPVDLGGSLGRDAATGRGALFATEALLNEHGKSVAGQRFVIQGFGNVGSWAAKLIHEQGGKVVAVSDITGAIKNEKGIDIESLFKHVKETRGVKGFHDAHPIDANSILVEDCDVLIPAALGGVINKDNHKLKIKAKYIIEAANHPTDPEADEILSKKGVTILPDIYANSGGVTVSYFEWVQNIQGFMWDEKKVNDELKTYMTRGFKDVKDMCKTHNCDLRMGAFTLGVNRVARATVLRGWEA.

Residue lysine 102 is part of the active site.

Belongs to the Glu/Leu/Phe/Val dehydrogenases family. As to expression, in roots, stems, leaves and flowers but not in fruits.

The protein localises to the mitochondrion matrix. It carries out the reaction L-glutamate + NAD(+) + H2O = 2-oxoglutarate + NH4(+) + NADH + H(+). It catalyses the reaction L-glutamate + NADP(+) + H2O = 2-oxoglutarate + NH4(+) + NADPH + H(+). The protein is Glutamate dehydrogenase (GDH1) of Solanum lycopersicum (Tomato).